The sequence spans 640 residues: 1-deoxy-D-xylulose-5-phosphate synthase (640 aa).

Thiamine diphosphate-binding positions include His-75 and 117-119; that span reads GHA. Asp-146 is a binding site for Mg(2+). Thiamine diphosphate-binding positions include 147 to 148, Asn-175, and Glu-370; that span reads AA. Asn-175 serves as a coordination point for Mg(2+).

Belongs to the transketolase family. DXPS subfamily. As to quaternary structure, homodimer. Mg(2+) is required as a cofactor. It depends on thiamine diphosphate as a cofactor.

It carries out the reaction D-glyceraldehyde 3-phosphate + pyruvate + H(+) = 1-deoxy-D-xylulose 5-phosphate + CO2. It functions in the pathway metabolic intermediate biosynthesis; 1-deoxy-D-xylulose 5-phosphate biosynthesis; 1-deoxy-D-xylulose 5-phosphate from D-glyceraldehyde 3-phosphate and pyruvate: step 1/1. Functionally, catalyzes the acyloin condensation reaction between C atoms 2 and 3 of pyruvate and glyceraldehyde 3-phosphate to yield 1-deoxy-D-xylulose-5-phosphate (DXP). This chain is 1-deoxy-D-xylulose-5-phosphate synthase, found in Chlamydia trachomatis serovar D (strain ATCC VR-885 / DSM 19411 / UW-3/Cx).